The sequence spans 403 residues: Fasciclin-like arabinogalactan protein 2 (403 aa).

Residues 1–26 form the signal peptide; sequence MAYLRRAATALVLIFQLHLFLSLSNA. FAS1 domains are found at residues 27-174 and 187-326; these read HNIT…SQVL and SDLI…DKVL. N-linked (GlcNAc...) asparagine glycans are attached at residues Asn28, Asn130, Asn164, and Asn248. Positions 338 to 371 are disordered; that stretch reads SAPAPKSSKKKPKNAEADADGPSADAPSDDDVEV. Residue Ala378 is the site of GPI-anchor amidated alanine attachment. A propeptide spans 379-403 (removed in mature form); it reads VSAMITRTSNVVTAIVGLCFGVWLM.

This sequence belongs to the fasciclin-like AGP family. In terms of tissue distribution, expressed mainly in flowers and to a lesser extent in leaves and roots.

Its subcellular location is the cell membrane. Functionally, may be a cell surface adhesion protein. This is Fasciclin-like arabinogalactan protein 2 (FLA2) from Arabidopsis thaliana (Mouse-ear cress).